The primary structure comprises 1153 residues: Protein unc-13 homolog 4B (1153 aa).

The interval 54–84 (VLKSSLAPLEENGSGGEEDSDESPDGTLQLS) is disordered. A C2 1 domain is found at 162–288 (ATHEEIYEAA…MKEIAVTASS (127 aa)). Ca(2+)-binding residues include aspartate 195, aspartate 201, aspartate 252, phenylalanine 253, and aspartate 254. The MHD1 domain maps to 637 to 755 (FEVYLILKRY…RCCIFYAQQM (119 aa)). An MHD2 domain is found at 869–975 (SNSMDQLMMY…LETSDLIHQY (107 aa)). One can recognise a C2 2 domain in the interval 990-1114 (PYGQLTITAQ…EATPPGEQIM (125 aa)). Ca(2+) is bound by residues aspartate 1019, aspartate 1025, aspartate 1083, and aspartate 1085.

It belongs to the unc-13 family. Interacts with Cam. The cofactor is Ca(2+).

The protein resides in the cytoplasm. It is found in the cytoskeleton. The protein localises to the cell projection. Its subcellular location is the filopodium. It localises to the late endosome. The protein resides in the lysosome. Its function is as follows. Essential for tracheal development in embryos. Functions with the GTPase Rab39 and downstream of dnd, to regulate lumen fusion between previously separate tracheal branches (anastomosis). Essential component of secretory lysosome-related organelles (SLs) that are present in the tracheal fusion tip cells (FCs). Mediates intracellular fusion of the extending tracheal stalk cell lumen in the FCs by recruiting the SNARE complex component Syx1A to the SLs, this may then enable the SLs to interact with complementary SNAREs (such as Syb) present in the apical membrane of the FC-FC interface and the membranes of the separate tracheal stalk cells. May also function in the maturation and exocytosis of the SLs. This Drosophila melanogaster (Fruit fly) protein is Protein unc-13 homolog 4B.